The sequence spans 404 residues: Lipase lipl-3 (404 aa).

Residues 1–20 form the signal peptide; it reads MCSSLCALLLVILAVHNVHA. Asn-65 is a glycosylation site (N-linked (GlcNAc...) asparagine). The active-site Nucleophile is Ser-168. The N-linked (GlcNAc...) asparagine glycan is linked to Asn-272. Residues Asp-344 and His-376 each act as charge relay system in the active site.

Belongs to the AB hydrolase superfamily. Lipase family.

It localises to the secreted. The protein localises to the lysosome lumen. Its function is as follows. Lipase that, together with lipl-1, plays a role in the response to nutrient deprivation by controlling lipid metabolism. Specifically, involved in the breakdown of lipids during lipophagy, a process during which lipids contained in lipid droplets that have been delivered to lysosomes by autophagy are degraded. In Caenorhabditis elegans, this protein is Lipase lipl-3.